The primary structure comprises 536 residues: Transcriptional regulator RPN4 (536 aa).

Low complexity-rich tracts occupy residues Gln-154–Gln-181 and Ser-361–Pro-370. Disordered regions lie at residues Gln-154–Arg-196, Val-353–Met-375, and Glu-393–Thr-434. Residues Glu-393–Lys-411 show a composition bias toward basic and acidic residues. The C2H2-type zinc finger occupies His-440–His-471.

Its subcellular location is the nucleus. In terms of biological role, transcriptional activator of a number of genes encoding proteasomal subunits. Binds to the DNA sequence 5'-GAAGGCAAAA-3', enriched in regions upstream of proteasome genes. The chain is Transcriptional regulator RPN4 (RPN4) from Candida albicans (strain SC5314 / ATCC MYA-2876) (Yeast).